Here is an 84-residue protein sequence, read N- to C-terminus: Small ribosomal subunit protein bS18B (84 aa).

A compositionally biased stretch (basic residues) spans 1–10; that stretch reads MAVKRAPSKK. Residues 1–20 form a disordered region; that stretch reads MAVKRAPSKKVRAEQARRPK.

The protein belongs to the bacterial ribosomal protein bS18 family. As to quaternary structure, part of the 30S ribosomal subunit. Forms a tight heterodimer with protein bS6.

In terms of biological role, binds as a heterodimer with protein bS6 to the central domain of the 16S rRNA, where it helps stabilize the platform of the 30S subunit. This is Small ribosomal subunit protein bS18B from Nocardia farcinica (strain IFM 10152).